We begin with the raw amino-acid sequence, 369 residues long: Mitogen-activated protein kinase 5 (369 aa).

Residues 36–322 form the Protein kinase domain; it reads QPPIMPIGRG…VEEALDHPYL (287 aa). Residues 42–50 and Lys-65 contribute to the ATP site; that span reads IGRGAYGIV. Asp-162 (proton acceptor) is an active-site residue. Thr-194 carries the phosphothreonine modification. The TXY motif lies at 194–196; it reads TEY. A Phosphotyrosine modification is found at Tyr-196.

Belongs to the protein kinase superfamily. CMGC Ser/Thr protein kinase family. MAP kinase subfamily. Interacts with MKK1. Post-translationally, dually phosphorylated on Thr-194 and Tyr-196, which activates the enzyme.

It catalyses the reaction L-seryl-[protein] + ATP = O-phospho-L-seryl-[protein] + ADP + H(+). The enzyme catalyses L-threonyl-[protein] + ATP = O-phospho-L-threonyl-[protein] + ADP + H(+). Its activity is regulated as follows. Activated by threonine and tyrosine phosphorylation. In terms of biological role, involved in disease resistance and abiotic stress tolerance signaling pathways. The chain is Mitogen-activated protein kinase 5 (MPK5) from Oryza sativa subsp. indica (Rice).